We begin with the raw amino-acid sequence, 1014 residues long: Pre-mRNA-processing ATP-dependent RNA helicase prp11 (1014 aa).

Basic residues predominate over residues 1 to 11; it reads MSRRTRSRSPP. Positions 1–149 are disordered; sequence MSRRTRSRSP…SRFDRTERVG (149 aa). Basic and acidic residues-rich tracts occupy residues 15-87 and 106-121; these read YNRE…EYAR and RHAEEKEVDNKTKSDE. Positions 418–446 match the Q motif motif; that stretch reads TSWSQCGLSAQTISVINSLGYEKPTSIQA. A Helicase ATP-binding domain is found at 449–627; the sequence is IPAITSGRDV…RKVLKKPVEI (179 aa). Position 462–469 (462–469) interacts with ATP; it reads AKTGSGKT. A DEAD box motif is present at residues 575–578; the sequence is DEAD. The Helicase C-terminal domain maps to 638 to 802; that stretch reads EVEQIVEVRP…PVPKELQTLA (165 aa). Residues 815 to 875 are disordered; it reads KAAGGGFGGK…PEKSTGDPTL (61 aa). Basic and acidic residues-rich tracts occupy residues 827–838 and 855–875; these read SRLDETRNAERK and AEAKSPLEKITPEKSTGDPTL.

This sequence belongs to the DEAD box helicase family. DDX46/PRP5 subfamily.

The protein resides in the nucleus. It carries out the reaction ATP + H2O = ADP + phosphate + H(+). In terms of biological role, ATP-dependent RNA helicase involved in pre-spliceosome/complex A assembly and mRNA splicing. Bridges U1 and U2 snRNPs during pre-spliceosome assembly and enables stable U2 snRNP association with intron RNA. Through its helicase activity probably catalyzes an ATP-dependent conformational change of U2 snRNP. The chain is Pre-mRNA-processing ATP-dependent RNA helicase prp11 (prp11) from Schizosaccharomyces pombe (strain 972 / ATCC 24843) (Fission yeast).